The following is an 85-amino-acid chain: Small ribosomal subunit protein bS18A (85 aa).

It belongs to the bacterial ribosomal protein bS18 family. In terms of assembly, part of the 30S ribosomal subunit. Forms a tight heterodimer with protein bS6.

Functionally, binds as a heterodimer with protein bS6 to the central domain of the 16S rRNA, where it helps stabilize the platform of the 30S subunit. The polypeptide is Small ribosomal subunit protein bS18A (Mycolicibacterium smegmatis (strain ATCC 700084 / mc(2)155) (Mycobacterium smegmatis)).